A 196-amino-acid polypeptide reads, in one-letter code: Thymidine kinase (196 aa).

ATP-binding positions include 9–16 and 87–90; these read SAMNAGKS and DECQ. Glutamate 88 functions as the Proton acceptor in the catalytic mechanism. 4 residues coordinate Zn(2+): cysteine 145, cysteine 147, cysteine 182, and histidine 185.

The protein belongs to the thymidine kinase family. In terms of assembly, homotetramer.

Its subcellular location is the cytoplasm. The enzyme catalyses thymidine + ATP = dTMP + ADP + H(+). The polypeptide is Thymidine kinase (Yersinia pestis).